A 219-amino-acid chain; its full sequence is NADH-ubiquinone oxidoreductase 23 kDa subunit, mitochondrial (219 aa).

4Fe-4S ferredoxin-type domains are found at residues 111–140 (RRYP…IEAE) and 150–179 (TRYD…ESPN). The [4Fe-4S] cluster site is built by cysteine 120, cysteine 123, cysteine 126, cysteine 130, cysteine 159, cysteine 162, cysteine 165, and cysteine 169.

Belongs to the complex I 23 kDa subunit family. As to quaternary structure, complex I is composed of about 40 different subunits. It depends on [4Fe-4S] cluster as a cofactor.

It localises to the mitochondrion. The enzyme catalyses a ubiquinone + NADH + 5 H(+)(in) = a ubiquinol + NAD(+) + 4 H(+)(out). In terms of biological role, core subunit of the mitochondrial membrane respiratory chain NADH dehydrogenase (Complex I) that is believed to belong to the minimal assembly required for catalysis. Complex I functions in the transfer of electrons from NADH to the respiratory chain. The immediate electron acceptor for the enzyme is believed to be ubiquinone. May donate electrons to ubiquinone. This chain is NADH-ubiquinone oxidoreductase 23 kDa subunit, mitochondrial (nuo21.3c), found in Neurospora crassa (strain ATCC 24698 / 74-OR23-1A / CBS 708.71 / DSM 1257 / FGSC 987).